Reading from the N-terminus, the 379-residue chain is Glutamate 5-kinase (379 aa).

Lysine 17 contributes to the ATP binding site. Substrate is bound by residues serine 57, aspartate 144, and asparagine 156. ATP is bound at residue serine 176–aspartate 177. In terms of domain architecture, PUA spans serine 282–glutamate 359.

This sequence belongs to the glutamate 5-kinase family.

The protein localises to the cytoplasm. It carries out the reaction L-glutamate + ATP = L-glutamyl 5-phosphate + ADP. It participates in amino-acid biosynthesis; L-proline biosynthesis; L-glutamate 5-semialdehyde from L-glutamate: step 1/2. Its function is as follows. Catalyzes the transfer of a phosphate group to glutamate to form L-glutamate 5-phosphate. This is Glutamate 5-kinase from Bartonella henselae (strain ATCC 49882 / DSM 28221 / CCUG 30454 / Houston 1) (Rochalimaea henselae).